The primary structure comprises 239 residues: DNA repair protein RecO (239 aa).

The protein belongs to the RecO family.

In terms of biological role, involved in DNA repair and RecF pathway recombination. The polypeptide is DNA repair protein RecO (Bifidobacterium longum (strain DJO10A)).